The following is a 257-amino-acid chain: 5-oxoprolinase subunit A (257 aa).

It belongs to the LamB/PxpA family. Forms a complex composed of PxpA, PxpB and PxpC.

The enzyme catalyses 5-oxo-L-proline + ATP + 2 H2O = L-glutamate + ADP + phosphate + H(+). In terms of biological role, catalyzes the cleavage of 5-oxoproline to form L-glutamate coupled to the hydrolysis of ATP to ADP and inorganic phosphate. In Pectobacterium atrosepticum (strain SCRI 1043 / ATCC BAA-672) (Erwinia carotovora subsp. atroseptica), this protein is 5-oxoprolinase subunit A.